Consider the following 187-residue polypeptide: Avirulence protein ATR39-2 (187 aa).

Residues 1 to 20 form the signal peptide; it reads MVKCTPLLALTVIVSAGSDA. Positions 49-66 match the RxLR-dEER motif; sequence RVLRASDVPNEVAAGESR.

The protein belongs to the RxLR effector family.

The protein resides in the secreted. Its subcellular location is the host cell. In terms of biological role, secreted effector that acts as an elicitor of hypersensitive response (HR) specifically on plants carrying defense protein RPP39. The allele ATR39-1 is recognized by RPP39, whereas the ATR39-2 allele is nor recognized. In Hyaloperonospora arabidopsidis (strain Emoy2) (Downy mildew agent), this protein is Avirulence protein ATR39-2.